Reading from the N-terminus, the 313-residue chain is Glutaminase (313 aa).

Ser64, Asn116, Glu163, Asn170, Tyr194, Tyr246, and Val264 together coordinate substrate.

It belongs to the glutaminase family. Homotetramer.

The catalysed reaction is L-glutamine + H2O = L-glutamate + NH4(+). The sequence is that of Glutaminase from Exiguobacterium sp. (strain ATCC BAA-1283 / AT1b).